Reading from the N-terminus, the 95-residue chain is Co-chaperonin GroES (95 aa).

Belongs to the GroES chaperonin family. In terms of assembly, heptamer of 7 subunits arranged in a ring. Interacts with the chaperonin GroEL.

The protein resides in the cytoplasm. In terms of biological role, together with the chaperonin GroEL, plays an essential role in assisting protein folding. The GroEL-GroES system forms a nano-cage that allows encapsulation of the non-native substrate proteins and provides a physical environment optimized to promote and accelerate protein folding. GroES binds to the apical surface of the GroEL ring, thereby capping the opening of the GroEL channel. In Francisella philomiragia subsp. philomiragia (strain ATCC 25017 / CCUG 19701 / FSC 153 / O#319-036), this protein is Co-chaperonin GroES.